The primary structure comprises 345 residues: Phenylalanine--tRNA ligase alpha subunit (345 aa).

Glu262 is a Mg(2+) binding site.

The protein belongs to the class-II aminoacyl-tRNA synthetase family. Phe-tRNA synthetase alpha subunit type 1 subfamily. Tetramer of two alpha and two beta subunits. Mg(2+) serves as cofactor.

The protein resides in the cytoplasm. The enzyme catalyses tRNA(Phe) + L-phenylalanine + ATP = L-phenylalanyl-tRNA(Phe) + AMP + diphosphate + H(+). This chain is Phenylalanine--tRNA ligase alpha subunit, found in Ehrlichia canis (strain Jake).